Reading from the N-terminus, the 168-residue chain is Phosphopantetheine adenylyltransferase (168 aa).

A substrate-binding site is contributed by Thr9. Residues Thr9–Phe10 and His17 contribute to the ATP site. Substrate is bound by residues Lys41, Leu73, and Arg87. ATP contacts are provided by residues Gly88 to Arg90, Glu98, and Tyr123 to Thr129.

Belongs to the bacterial CoaD family. As to quaternary structure, homohexamer. The cofactor is Mg(2+).

It localises to the cytoplasm. It carries out the reaction (R)-4'-phosphopantetheine + ATP + H(+) = 3'-dephospho-CoA + diphosphate. It participates in cofactor biosynthesis; coenzyme A biosynthesis; CoA from (R)-pantothenate: step 4/5. Functionally, reversibly transfers an adenylyl group from ATP to 4'-phosphopantetheine, yielding dephospho-CoA (dPCoA) and pyrophosphate. The polypeptide is Phosphopantetheine adenylyltransferase (Paraburkholderia phymatum (strain DSM 17167 / CIP 108236 / LMG 21445 / STM815) (Burkholderia phymatum)).